We begin with the raw amino-acid sequence, 292 residues long: Phosphoribulokinase, plasmid (292 aa).

An ATP-binding site is contributed by 12–20 (GSSGAGTTS).

This sequence belongs to the phosphoribulokinase family. In terms of assembly, homooctamer.

It carries out the reaction D-ribulose 5-phosphate + ATP = D-ribulose 1,5-bisphosphate + ADP + H(+). The protein operates within carbohydrate biosynthesis; Calvin cycle. This chain is Phosphoribulokinase, plasmid (cfxP), found in Cupriavidus necator (strain ATCC 17699 / DSM 428 / KCTC 22496 / NCIMB 10442 / H16 / Stanier 337) (Ralstonia eutropha).